The chain runs to 190 residues: MSAPQAKILSQAPTELELQVAQAFVELENSSPELKAELRPLQFKSIREIDVAGGKKALAIFVPVPSLAGFHKVQTKLTRELEKKFQDRHVIFLAERRILPKPSRTSRQVQKRPRSRTLTAVHDKILEDLVFPTEIVGKRVRYLVGGNKIQKVLLDSKDVQQIDYKLESFQAVYNKLTGKQIVFEIPSETH.

An N-acetylserine modification is found at serine 2. Residues lysine 83, lysine 84, and lysine 124 each participate in a glycyl lysine isopeptide (Lys-Gly) (interchain with G-Cter in ubiquitin) cross-link.

It belongs to the eukaryotic ribosomal protein eS7 family. Component of the small ribosomal subunit (SSU). Mature yeast ribosomes consist of a small (40S) and a large (60S) subunit. The 40S small subunit contains 1 molecule of ribosomal RNA (18S rRNA) and 33 different proteins (encoded by 57 genes). The large 60S subunit contains 3 rRNA molecules (25S, 5.8S and 5S rRNA) and 46 different proteins (encoded by 81 genes). Interacts with snoRNA U3. uS11 interacts with MPP10. Component of the ribosomal small subunit (SSU) processome composed of at least 40 protein subunits and snoRNA U3. Post-translationally, N-terminally acetylated by acetyltransferase NatA. In terms of processing, ubiquitinated at Lys-83 and Lys-84 in response to stalled ribosomes, leading to activation of the No-Go Decay (NGD) pathway: first monoubiquitinated by MOT2/NOT4, followed by formation by HEL2 of 'Lys-63'-linked polyubiquitin chains on monoubiquitin.

It localises to the cytoplasm. The protein resides in the nucleus. It is found in the nucleolus. Functionally, component of the ribosome, a large ribonucleoprotein complex responsible for the synthesis of proteins in the cell. The small ribosomal subunit (SSU) binds messenger RNAs (mRNAs) and translates the encoded message by selecting cognate aminoacyl-transfer RNA (tRNA) molecules. The large subunit (LSU) contains the ribosomal catalytic site termed the peptidyl transferase center (PTC), which catalyzes the formation of peptide bonds, thereby polymerizing the amino acids delivered by tRNAs into a polypeptide chain. The nascent polypeptides leave the ribosome through a tunnel in the LSU and interact with protein factors that function in enzymatic processing, targeting, and the membrane insertion of nascent chains at the exit of the ribosomal tunnel. eS7 is involved in nucleolar processing of pre-18S ribosomal RNA and ribosome assembly. The polypeptide is Small ribosomal subunit protein eS7A (Saccharomyces cerevisiae (strain ATCC 204508 / S288c) (Baker's yeast)).